The following is a 219-amino-acid chain: Large ribosomal subunit protein uL3 (219 aa).

The protein belongs to the universal ribosomal protein uL3 family. In terms of assembly, part of the 50S ribosomal subunit. Forms a cluster with proteins L14 and L19.

Its function is as follows. One of the primary rRNA binding proteins, it binds directly near the 3'-end of the 23S rRNA, where it nucleates assembly of the 50S subunit. The sequence is that of Large ribosomal subunit protein uL3 from Corynebacterium kroppenstedtii (strain DSM 44385 / JCM 11950 / CIP 105744 / CCUG 35717).